Consider the following 339-residue polypeptide: Cathepsin L-like peptidase (339 aa).

Positions 1-16 are cleaved as a signal peptide; it reads MKILILLVAFVAAANA. Residues 17–121 constitute a propeptide, activation peptide; the sequence is VSLYELVKEE…VTFIEPANVE (105 aa). The N-linked (GlcNAc...) asparagine glycan is linked to N95. Disulfide bonds link C143–C186, C177–C219, and C278–C328. C146 is an active-site residue. Catalysis depends on residues H285 and N306.

It belongs to the peptidase C1 family. Dimer of a heavy and a light chain linked by disulfide bonds. Interacts with cystatin; the interaction results in inhibition of cathepsin L-like peptidase activity. As to expression, salivary gland. Midgut.

The catalysed reaction is Specificity close to that of papain. As compared to cathepsin B, cathepsin L exhibits higher activity toward protein substrates, but has little activity on Z-Arg-Arg-NHMec, and no peptidyl-dipeptidase activity.. More active in the presence of a reducing agent DTT. Its function is as follows. Proteinase exhibiting preference for Leu, Val and Phe residues at the P2 position. This chain is Cathepsin L-like peptidase, found in Aedes aegypti (Yellowfever mosquito).